A 48-amino-acid chain; its full sequence is MTNSQAPMQAAEVRVYPIFTVRWLAVHALAIPSVFFLGSIAAMQFVAR.

The chain crosses the membrane as a helical span at residues 23-39; that stretch reads WLAVHALAIPSVFFLGS. His-27 contributes to the heme binding site.

Belongs to the PsbE/PsbF family. Heterodimer of an alpha subunit and a beta subunit. PSII is composed of 1 copy each of membrane proteins PsbA, PsbB, PsbC, PsbD, PsbE, PsbF, PsbH, PsbI, PsbJ, PsbK, PsbL, PsbM, PsbT, PsbX, PsbY, Psb30/Ycf12, peripheral proteins PsbO, CyanoQ (PsbQ), PsbU, PsbV and a large number of cofactors. It forms dimeric complexes. Requires heme b as cofactor.

It localises to the cellular thylakoid membrane. Its function is as follows. This b-type cytochrome is tightly associated with the reaction center of photosystem II (PSII). PSII is a light-driven water:plastoquinone oxidoreductase that uses light energy to abstract electrons from H(2)O, generating O(2) and a proton gradient subsequently used for ATP formation. It consists of a core antenna complex that captures photons, and an electron transfer chain that converts photonic excitation into a charge separation. The polypeptide is Cytochrome b559 subunit beta (Prochlorococcus marinus (strain MIT 9301)).